We begin with the raw amino-acid sequence, 743 residues long: 1,4-alpha-glucan branching enzyme GlgB (743 aa).

The active-site Nucleophile is the Asp-416. The active-site Proton donor is Glu-469.

This sequence belongs to the glycosyl hydrolase 13 family. GlgB subfamily. In terms of assembly, monomer.

It carries out the reaction Transfers a segment of a (1-&gt;4)-alpha-D-glucan chain to a primary hydroxy group in a similar glucan chain.. The protein operates within glycan biosynthesis; glycogen biosynthesis. Its function is as follows. Catalyzes the formation of the alpha-1,6-glucosidic linkages in glycogen by scission of a 1,4-alpha-linked oligosaccharide from growing alpha-1,4-glucan chains and the subsequent attachment of the oligosaccharide to the alpha-1,6 position. This Shewanella baltica (strain OS185) protein is 1,4-alpha-glucan branching enzyme GlgB.